Reading from the N-terminus, the 455-residue chain is DENN domain-containing protein 11 (455 aa).

Position 2 is an N-acetylvaline (V2). The uDENN domain occupies 15–187 (EGPAVSVPQD…QLEMPGHYSH (173 aa)). The segment at 21 to 61 (VPQDPALQAGGWVRGGSGGGRVAAEAPRRREPEEPAPPEVL) is disordered. Gly residues predominate over residues 32–41 (WVRGGSGGGR). The residue at position 41 (R41) is an Omega-N-methylarginine. Residues 214-362 (WLPSIHRYMY…LNSADREKYR (149 aa)) enclose the cDENN domain. The 92-residue stretch at 364–455 (LNEQRQMLLY…MLVIDNPCCP (92 aa)) folds into the dDENN domain.

This sequence belongs to the DENND11 family. As to expression, expressed within the somatodendritic compartment of neurons, is also present on dendritic growth cones, but is not found in astrocytes.

Functionally, probable guanine nucleotide exchange factor (GEF). May promote the exchange of GDP to GTP, converting inactive GDP-bound small GTPases into their active GTP-bound form. May play a role in neuritogenesis, as well as in neuronal recovery and/or restructuring in the hippocampus following transient cerebral ischemia. This Rattus norvegicus (Rat) protein is DENN domain-containing protein 11 (Dennd11).